A 504-amino-acid polypeptide reads, in one-letter code: Maturase K (504 aa).

It belongs to the intron maturase 2 family. MatK subfamily.

The protein resides in the plastid. The protein localises to the chloroplast. Usually encoded in the trnK tRNA gene intron. Probably assists in splicing its own and other chloroplast group II introns. This chain is Maturase K, found in Nepenthes gracilis (Slender pitcher plant).